We begin with the raw amino-acid sequence, 237 residues long: Uridylate kinase (237 aa).

Residue 9–12 (KLSG) coordinates ATP. Position 51 (G51) interacts with UMP. Positions 52 and 56 each coordinate ATP. UMP-binding positions include D71 and 132–139 (CGNPFFTT). T159, Y165, and D168 together coordinate ATP.

The protein belongs to the UMP kinase family. In terms of assembly, homohexamer.

It localises to the cytoplasm. It catalyses the reaction UMP + ATP = UDP + ADP. It functions in the pathway pyrimidine metabolism; CTP biosynthesis via de novo pathway; UDP from UMP (UMPK route): step 1/1. Inhibited by UTP. Its function is as follows. Catalyzes the reversible phosphorylation of UMP to UDP. In Prochlorococcus marinus (strain NATL1A), this protein is Uridylate kinase.